The primary structure comprises 867 residues: MSFFFKRTFGSINKKIIKSFRKIVEQINALETKMQSLSDEELADKTEEFKRELKNGKTLNDLLVPAFAVVREASRRFLNMRHFDVQLIGGMVLHNGMVSEMKTGEGKTLVATLAAYLNSLEGKGVHVVTVNDYLAKRDTEWMSKLYNSLGVSVAFITNDLTDEERKEAYSADIVYSTNNELAFDYLRDNMKFSREDMVQRGFNYAIVDEVDSILIDEARTPLIISGPVEENNQIYKHIDKIVTKLVDSDYEVDEKGRAVFLTEDGISQVEELLRSYNLISEKSSLYDAGNMIMTHYIDQALRAHKLFTADKDYIVKDGKVVIIDEFTGRMMEGRRYSDGLHQALEAKENLEIQYENQTLASVTFQNYFRMYNKLSGMTGTAATEAEELRDIYRLNVVKIPTNVTVKRIDVDDEIYGTEKEKFNAVLKFIKECHKRLQPVLVGTVSIENSEKLSALLRNHFLRHSVLNARYHEQEAYIIAQAGVPGNITIATNMAGRGTDIQLGGNAEMIAKVELKKIKNADEREKKYQEIIERVKRDKEIAMKAGGLCVIGTERHESRRIDDQLRGRSGRQGDPGLSKFFLSLEDDLMRIFGSDRMRSFLKRVGLKNNEAIHHPWINKALEKAQKKVEARNYDVRKSLLKFDDVINNQRKVIFEQRNHILGNEINDLFEVYSEVNKSVMESIVQGGYYEDYVEDIAKEFHIRYGITLDKKDLAKFLNKQEALDYINGKVKEFFTEKEKYFNGQQTTDLWNTIVKQVMIMTLDHLWREHLSILESLRQSIGLRAMGQKDPLNEFKREAFLIFECMLERGKELTIHRLAHFKLVDNQEVGGRLHPTRKDNLPKVSRNDKCPCNSGKKYKHCHGAVTVMN.

Residues Gln86, 104-108 (GEGKT), and Asp499 each bind ATP. Residues Cys848, Cys850, Cys859, and His860 each coordinate Zn(2+).

This sequence belongs to the SecA family. Monomer and homodimer. Part of the essential Sec protein translocation apparatus which comprises SecA, SecYEG and auxiliary proteins SecDF-YajC and YidC. Requires Zn(2+) as cofactor.

The protein resides in the cell membrane. Its subcellular location is the cytoplasm. The catalysed reaction is ATP + H2O + cellular proteinSide 1 = ADP + phosphate + cellular proteinSide 2.. Part of the Sec protein translocase complex. Interacts with the SecYEG preprotein conducting channel. Has a central role in coupling the hydrolysis of ATP to the transfer of proteins into and across the cell membrane, serving both as a receptor for the preprotein-SecB complex and as an ATP-driven molecular motor driving the stepwise translocation of polypeptide chains across the membrane. The sequence is that of Protein translocase subunit SecA from Wolbachia sp. subsp. Brugia malayi (strain TRS).